We begin with the raw amino-acid sequence, 977 residues long: Pro-apoptotic serine protease NMA111 (977 aa).

Positions 1–36 are disordered; sequence MTIQAHKRTLSEVSTSSVGQLKRREGYTEDYTDEGS. The interval 64–254 is serine protease; that stretch reads VVSVHFAQVA…LPLDRILRAL (191 aa). Catalysis depends on charge relay system residues His-102, Asp-133, and Ser-216. PDZ domains follow at residues 271-356 and 749-835; these read QWLL…LVVQ and SVLQ…VRKG.

Belongs to the peptidase S1C family.

Its subcellular location is the nucleus. Nuclear serine protease which mediates apoptosis. The chain is Pro-apoptotic serine protease NMA111 (NMA111) from Eremothecium gossypii (strain ATCC 10895 / CBS 109.51 / FGSC 9923 / NRRL Y-1056) (Yeast).